Reading from the N-terminus, the 633-residue chain is tRNA uridine 5-carboxymethylaminomethyl modification enzyme MnmG (633 aa).

FAD contacts are provided by residues G15–G20, I127, and S182. NAD(+) is bound at residue G276–F290. Residue Q373 coordinates FAD.

This sequence belongs to the MnmG family. As to quaternary structure, homodimer. Heterotetramer of two MnmE and two MnmG subunits. FAD is required as a cofactor.

The protein localises to the cytoplasm. Its function is as follows. NAD-binding protein involved in the addition of a carboxymethylaminomethyl (cmnm) group at the wobble position (U34) of certain tRNAs, forming tRNA-cmnm(5)s(2)U34. The protein is tRNA uridine 5-carboxymethylaminomethyl modification enzyme MnmG of Streptococcus agalactiae serotype III (strain NEM316).